A 698-amino-acid polypeptide reads, in one-letter code: Ubiquitin-like modifier-activating enzyme ATG7 (698 aa).

Positions 11–13 (FAP) match the FAP motif motif. Residue lysine 41 forms a Glycyl lysine isopeptide (Lys-Gly) (interchain with G-Cter in ubiquitin) linkage. Catalysis depends on cysteine 567, which acts as the Glycyl thioester intermediate. Serine 693 is subject to Phosphoserine.

Belongs to the ATG7 family. In terms of assembly, homodimer. Interacts with ATG3; this interaction is essential for the transfer of ATG8-like proteins's thioester from ATG7 to ATG3 and plays a role in the conjugation of ATG12 to ATG5. Interacts with ATG12. Interacts with ATG10. Forms intermediate conjugates with GABARAPL1. Forms intermediate conjugates with ATG8-like proteins such as GABARAP, GABARAPL2 or MAP1LC3A. Interacts with EP300 acetyltransferase. Interacts with FOXO1. Acetylated by EP300. Post-translationally, polyubiquitinated on Lys-41 via 'Lys-63'-linked ubiquitin by TRIM32; this modification positiely regulates ATG8 and ATG12 activating enzyme activity leading to initiation of autophagy under metabolic stress. As to expression, widely expressed, especially in kidney, liver, lymph nodes and bone marrow.

The protein resides in the cytoplasm. Its subcellular location is the preautophagosomal structure. E1-like activating enzyme involved in the 2 ubiquitin-like systems required for cytoplasm to vacuole transport (Cvt) and autophagy. Activates ATG12 for its conjugation with ATG5 as well as the ATG8 family proteins for their conjugation with phosphatidylethanolamine. Both systems are needed for the ATG8 association to Cvt vesicles and autophagosomes membranes. Facilitates LC3-I lipidation with phosphatidylethanolamine to form LC3-II which is found on autophagosomal membranes. Required for autophagic death induced by caspase-8 inhibition. Required for mitophagy which contributes to regulate mitochondrial quantity and quality by eliminating the mitochondria to a basal level to fulfill cellular energy requirements and preventing excess ROS production. Modulates p53/TP53 activity to regulate cell cycle and survival during metabolic stress. Also plays a key role in the maintenance of axonal homeostasis, the prevention of axonal degeneration, the maintenance of hematopoietic stem cells, the formation of Paneth cell granules, as well as in adipose differentiation. Plays a role in regulating the liver clock and glucose metabolism by mediating the autophagic degradation of CRY1 (clock repressor) in a time-dependent manner. This Mus musculus (Mouse) protein is Ubiquitin-like modifier-activating enzyme ATG7.